Reading from the N-terminus, the 415-residue chain is Alditol oxidase (415 aa).

The FAD-binding PCMH-type domain occupies 12–179; that stretch reads ITYTAKEVHR…TALTLDLEPA (168 aa). Pros-8alpha-FAD histidine is present on histidine 46. FAD-binding positions include serine 106, serine 111, glycine 114, 118-121, and valine 169; that span reads TGTH. A xylitol-binding site is contributed by serine 106. Xylitol contacts are provided by glutamate 317, arginine 319, and threonine 342. Arginine 319 serves as a coordination point for FAD. Histidine 369 is an FAD binding site. A xylitol-binding site is contributed by lysine 372.

It belongs to the oxygen-dependent FAD-linked oxidoreductase family. Monomer. Requires FAD as cofactor.

It carries out the reaction an alditol + O2 = an aldose + H2O2. The enzyme catalyses xylitol + O2 = D-xylose + H2O2. It catalyses the reaction D-sorbitol + O2 = D-glucose + H2O2. Oxidase that performs selective oxidation of the terminal primary hydroxyl group of several alditols, with a reduction of O2 to H2O2. Shows highest activity on xylitol and D-sorbitol, and to a lesser extent, can also use galactitol, D-mannitol, and D-arabitol as substrates in vitro. Is not active on D-glucose, D-xylose, D-galactose, D-mannose, D-fructose, L-sorbose, L-fucose, myoinositol, glycerol, ethyl alcohol, and meso-erythritol. In Streptomyces sp. (strain IKD472 / FERM P-14339), this protein is Alditol oxidase.